Consider the following 479-residue polypeptide: UDP-glycosyltransferase 85A8 (479 aa).

UDP-alpha-D-glucose-binding positions include serine 302, tryptophan 358–cysteine 359, histidine 376–glutamate 384, and phenylalanine 398–glutamine 401.

Belongs to the UDP-glycosyltransferase family.

In terms of biological role, may glycosylate diterpenes or flavonols in leaves. This is UDP-glycosyltransferase 85A8 from Stevia rebaudiana (Stevia).